The chain runs to 184 residues: Ribosome-recycling factor (184 aa).

Belongs to the RRF family.

Its subcellular location is the cytoplasm. Its function is as follows. Responsible for the release of ribosomes from messenger RNA at the termination of protein biosynthesis. May increase the efficiency of translation by recycling ribosomes from one round of translation to another. The chain is Ribosome-recycling factor from Desulfotalea psychrophila (strain LSv54 / DSM 12343).